The sequence spans 241 residues: Phosphoribosylaminoimidazole-succinocarboxamide synthase (241 aa).

Belongs to the SAICAR synthetase family.

It carries out the reaction 5-amino-1-(5-phospho-D-ribosyl)imidazole-4-carboxylate + L-aspartate + ATP = (2S)-2-[5-amino-1-(5-phospho-beta-D-ribosyl)imidazole-4-carboxamido]succinate + ADP + phosphate + 2 H(+). The protein operates within purine metabolism; IMP biosynthesis via de novo pathway; 5-amino-1-(5-phospho-D-ribosyl)imidazole-4-carboxamide from 5-amino-1-(5-phospho-D-ribosyl)imidazole-4-carboxylate: step 1/2. The chain is Phosphoribosylaminoimidazole-succinocarboxamide synthase from Lacticaseibacillus paracasei (strain ATCC 334 / BCRC 17002 / CCUG 31169 / CIP 107868 / KCTC 3260 / NRRL B-441) (Lactobacillus paracasei).